The following is a 579-amino-acid chain: Arginine--tRNA ligase (579 aa).

Positions 123 to 133 (PNLAKEMHVGH) match the 'HIGH' region motif.

Belongs to the class-I aminoacyl-tRNA synthetase family. Monomer.

It is found in the cytoplasm. It catalyses the reaction tRNA(Arg) + L-arginine + ATP = L-arginyl-tRNA(Arg) + AMP + diphosphate. This chain is Arginine--tRNA ligase, found in Cellvibrio japonicus (strain Ueda107) (Pseudomonas fluorescens subsp. cellulosa).